The chain runs to 254 residues: Leucyl/phenylalanyl-tRNA--protein transferase (254 aa).

It belongs to the L/F-transferase family.

Its subcellular location is the cytoplasm. It carries out the reaction N-terminal L-lysyl-[protein] + L-leucyl-tRNA(Leu) = N-terminal L-leucyl-L-lysyl-[protein] + tRNA(Leu) + H(+). The enzyme catalyses N-terminal L-arginyl-[protein] + L-leucyl-tRNA(Leu) = N-terminal L-leucyl-L-arginyl-[protein] + tRNA(Leu) + H(+). The catalysed reaction is L-phenylalanyl-tRNA(Phe) + an N-terminal L-alpha-aminoacyl-[protein] = an N-terminal L-phenylalanyl-L-alpha-aminoacyl-[protein] + tRNA(Phe). Functionally, functions in the N-end rule pathway of protein degradation where it conjugates Leu, Phe and, less efficiently, Met from aminoacyl-tRNAs to the N-termini of proteins containing an N-terminal arginine or lysine. This is Leucyl/phenylalanyl-tRNA--protein transferase from Bordetella bronchiseptica (strain ATCC BAA-588 / NCTC 13252 / RB50) (Alcaligenes bronchisepticus).